The chain runs to 628 residues: Chaperone protein DnaK (628 aa).

Thr-174 is subject to Phosphothreonine; by autocatalysis. The tract at residues 589 to 628 is disordered; that stretch reads AAGGAGPDMGAGAGPDMGAGASNGSAPYGDDVVDGDYKEV. A compositionally biased stretch (gly residues) spans 591–605; sequence GGAGPDMGAGAGPDM.

The protein belongs to the heat shock protein 70 family.

Its function is as follows. Acts as a chaperone. The polypeptide is Chaperone protein DnaK (Lachnospira eligens (strain ATCC 27750 / DSM 3376 / VPI C15-48 / C15-B4) (Eubacterium eligens)).